Reading from the N-terminus, the 265-residue chain is uncharacterized protein (265 aa).

Disordered stretches follow at residues 62-94 (RNKKKEEKKGKGLMTARGGNRRDTETSQQALGK) and 118-149 (MVPGSYIKDGPKKSDTDIKDAVDPESTQRPNP). Basic and acidic residues predominate over residues 126 to 139 (DGPKKSDTDIKDAV).

This is an uncharacterized protein from Homo sapiens (Human).